A 134-amino-acid polypeptide reads, in one-letter code: Large ribosomal subunit protein bL20 (134 aa).

This sequence belongs to the bacterial ribosomal protein bL20 family.

Its function is as follows. Binds directly to 23S ribosomal RNA and is necessary for the in vitro assembly process of the 50S ribosomal subunit. It is not involved in the protein synthesizing functions of that subunit. In Rhizobium etli (strain ATCC 51251 / DSM 11541 / JCM 21823 / NBRC 15573 / CFN 42), this protein is Large ribosomal subunit protein bL20.